We begin with the raw amino-acid sequence, 816 residues long: Neuroligin-4, X-linked (816 aa).

Positions 1–41 are cleaved as a signal peptide; that stretch reads MSRPQGLLWLPLLFTPVCVMLNSNVLLWLTALAIKFTLIDS. Residues 42–676 are Extracellular-facing; sequence QAQYPVVNTN…TKRDYSTELS (635 aa). A glycan (N-linked (GlcNAc...) asparagine) is linked at Asn102. Intrachain disulfides connect Cys110-Cys146 and Cys306-Cys317. The segment at 359–364 is interaction with NRXN1; the sequence is QGEFLN. Cys476 and Cys510 are oxidised to a cystine. The N-linked (GlcNAc...) asparagine glycan is linked to Asn511. Residues 636–659 form a disordered region; the sequence is TKRPAITPANNPKHSKDPHKTGPE. Positions 649-658 are enriched in basic and acidic residues; that stretch reads HSKDPHKTGP. The chain crosses the membrane as a helical span at residues 677 to 697; the sequence is VTIAVGASLLFLNILAFAALY. The Cytoplasmic segment spans residues 698–816; it reads YKKDKRRHET…LPHGHSTTRV (119 aa). At Ser712 the chain carries Phosphoserine.

The protein belongs to the type-B carboxylesterase/lipase family. In terms of assembly, homodimer. Interacts with NRXN1 in a calcium-dependent manner. Interaction with neurexins is mediated by heparan sulfate glycan modification on neurexin. Interacts through its C-terminus with DLG4/PSD-95 third PDZ domain. As to expression, expressed at highest levels in heart. Expressed at lower levels in liver, skeletal muscle and pancreas and at very low levels in brain.

Its subcellular location is the cell membrane. It is found in the postsynaptic density membrane. Cell surface protein involved in cell-cell-interactions via its interactions with neurexin family members. The polypeptide is Neuroligin-4, X-linked (NLGN4X) (Homo sapiens (Human)).